Reading from the N-terminus, the 667-residue chain is Interleukin-17 receptor E (667 aa).

Residues 1-23 (MGSSRLAALLLPLLLIVIDLSDS) form the signal peptide. Topologically, residues 24-454 (AGIGFRHLPH…LLCPDVSYRH (431 aa)) are extracellular. A disordered region spans residues 126–174 (LPRRHLSEKSHHISIPSPDISHKGLRSKRTQPSDPETWESLPRLDSQRH). N-linked (GlcNAc...) asparagine glycans are attached at residues N318, N347, and N364. A helical transmembrane segment spans residues 455 to 475 (LGLLILALLALLTLLGVVLAL). Residues 476–667 (TCRRPQSGPG…REAARLADLG (192 aa)) are Cytoplasmic-facing. In terms of domain architecture, SEFIR spans 487 to 624 (ARPVLLLHAA…LLRDLPRLLR (138 aa)).

As to quaternary structure, forms heterodimers with IL17RA; the heterodimer binds IL17C. In terms of tissue distribution, predominantly expressed in mucosal tissues with high levels in keratinocytes and colon epithelial cells. Very low expression in dermal fibroblasts. Expressed in various tumor cell lines.

It localises to the cell membrane. The protein localises to the cytoplasm. Its subcellular location is the secreted. Its function is as follows. Specific functional receptor for IL17C. May be signaling through the NF-kappa-B and MAPK pathways. May require TRAF3IP2 /ACT1 for signaling. May be a crucial regulator in innate immunity to bacterial pathogens. Isoform 2 and isoform 4 may be either cytoplasmic inactive or dominant active forms. Isoform 3 and isoform 5 may act as soluble decoy receptors. This is Interleukin-17 receptor E (IL17RE) from Homo sapiens (Human).